A 119-amino-acid chain; its full sequence is Beta-2-microglobulin (119 aa).

The signal sequence occupies residues 1 to 20; that stretch reads MSPSVALAVLALLSLSGLEA. Residues 25-114 form the Ig-like C1-type domain; it reads PKIQVYSRHP…VTLSGPRTVK (90 aa). Cys45 and Cys100 are joined by a disulfide.

Belongs to the beta-2-microglobulin family. In terms of assembly, heterodimer of an alpha chain and a beta chain. Beta-2-microglobulin is the beta-chain of major histocompatibility complex class I molecules.

Its subcellular location is the secreted. Component of the class I major histocompatibility complex (MHC). Involved in the presentation of peptide antigens to the immune system. The chain is Beta-2-microglobulin (B2M) from Macaca fascicularis (Crab-eating macaque).